The following is a 577-amino-acid chain: E3 ubiquitin-protein ligase MSL2 (577 aa).

Positions M1–A116 are sufficient for interaction with MSL1. C44, C47, C62, H64, C67, C70, C81, and C84 together coordinate Zn(2+). The segment at C44 to K85 adopts an RING-type zinc-finger fold. Residue K375 forms a Glycyl lysine isopeptide (Lys-Gly) (interchain with G-Cter in SUMO2) linkage. Positions T405–I427 are disordered. A compositionally biased stretch (basic residues) spans S407 to T423. S447 bears the Phosphoserine mark. The region spanning Q457–K508 is the CXC MSL2-type domain. Zn(2+) is bound by residues C462, C464, C476, C481, C483, C490, C493, C495, and C498.

This sequence belongs to the MSL2 family. As to quaternary structure, component of a multisubunit histone acetyltransferase complex (MSL) at least composed of the KAT8/MOF/MYST1, MSL1/hampin, MSL2 and MSL3. Forms a MSL heterotetrameric core with MSL1.

It is found in the nucleus. Its subcellular location is the chromosome. The catalysed reaction is S-ubiquitinyl-[E2 ubiquitin-conjugating enzyme]-L-cysteine + [acceptor protein]-L-lysine = [E2 ubiquitin-conjugating enzyme]-L-cysteine + N(6)-ubiquitinyl-[acceptor protein]-L-lysine.. It functions in the pathway protein modification; protein ubiquitination. Functionally, non-catalytic component of the MSL histone acetyltransferase complex, a multiprotein complex that mediates the majority of histone H4 acetylation at 'Lys-16' (H4K16ac), an epigenetic mark that prevents chromatin compaction. The MSL complex is required for chromosome stability and genome integrity by maintaining homeostatic levels of H4K16ac. The MSL complex is also involved in gene dosage by promoting up-regulation of genes expressed by the X chromosome. X up-regulation is required to compensate for autosomal biallelic expression. The MSL complex also participates in gene dosage compensation by promoting expression of Tsix non-coding RNA. MSL2 plays a key role in gene dosage by ensuring biallelic expression of a subset of dosage-sensitive genes, including many haploinsufficient genes. Acts by promoting promoter-enhancer contacts, thereby preventing DNA methylation of one allele and creating a methylation-free environment for methylation-sensitive transcription factors such as SP1, KANSL1 and KANSL3. Also acts as an E3 ubiquitin ligase that promotes monoubiquitination of histone H2B at 'Lys-35' (H2BK34Ub), but not that of H2A. This activity is greatly enhanced by heterodimerization with MSL1. H2B ubiquitination in turn stimulates histone H3 methylation at 'Lys-4' (H3K4me) and 'Lys-79' (H3K79me) and leads to gene activation, including that of HOXA9 and MEIS1. Also involved in the DNA damage response by mediating ubiquitination of TP53/p53 and TP53BP1. In Homo sapiens (Human), this protein is E3 ubiquitin-protein ligase MSL2.